The chain runs to 454 residues: uncharacterized protein (454 aa).

This sequence belongs to the outer membrane factor (OMF) (TC 1.B.17) family.

This is an uncharacterized protein from Haemophilus influenzae (strain ATCC 51907 / DSM 11121 / KW20 / Rd).